We begin with the raw amino-acid sequence, 99 residues long: A-type ATP synthase subunit F (99 aa).

It belongs to the V-ATPase F subunit family. As to quaternary structure, has multiple subunits with at least A(3), B(3), C, D, E, F, H, I and proteolipid K(x).

The protein localises to the cell membrane. Component of the A-type ATP synthase that produces ATP from ADP in the presence of a proton gradient across the membrane. The protein is A-type ATP synthase subunit F of Methanothrix thermoacetophila (strain DSM 6194 / JCM 14653 / NBRC 101360 / PT) (Methanosaeta thermophila).